The following is a 129-amino-acid chain: Small ribosomal subunit protein uS11 (129 aa).

It belongs to the universal ribosomal protein uS11 family. In terms of assembly, part of the 30S ribosomal subunit. Interacts with proteins S7 and S18. Binds to IF-3.

Functionally, located on the platform of the 30S subunit, it bridges several disparate RNA helices of the 16S rRNA. Forms part of the Shine-Dalgarno cleft in the 70S ribosome. The chain is Small ribosomal subunit protein uS11 from Maridesulfovibrio salexigens (strain ATCC 14822 / DSM 2638 / NCIMB 8403 / VKM B-1763) (Desulfovibrio salexigens).